Here is a 284-residue protein sequence, read N- to C-terminus: MRFVIITGLSGAGKTQALKAMEDMGFFCIDNFPPALLPKLADLFYHSKNVDKVALGMDLRGGQFFEDIYSSLEFLKKNNYDYEIVFLEASDEVLIKRFKETRRKHPLSEEGRIVDGINEERKRLAEIRKIANSIIDTSNLTSSQLKEELSNIFLKGKKFKGIIIDIMSFGYKYGIPLDADLVFDVRFLPNPFYIEELRPLTGNDDKVKEYVMKWEEAKEFLKKLGDMIKFLIPYYIREGKSQLVIAIGCTGGKHRSVTIANALYEFLKKEDYSVILHHRDIGEE.

Position 8–15 (G8–T15) interacts with ATP. D58–G61 is a GTP binding site.

Belongs to the RapZ-like family.

In terms of biological role, displays ATPase and GTPase activities. This is Nucleotide-binding protein Teth39_0666 from Thermoanaerobacter pseudethanolicus (strain ATCC 33223 / 39E) (Clostridium thermohydrosulfuricum).